We begin with the raw amino-acid sequence, 373 residues long: Chorismate synthase (373 aa).

The NADP(+) site is built by Arg-48 and Arg-54. FMN is bound by residues 131-133, 243-244, Gly-288, 303-307, and Arg-329; these read RSS, NA, and KPTSS.

This sequence belongs to the chorismate synthase family. In terms of assembly, homotetramer. It depends on FMNH2 as a cofactor.

It catalyses the reaction 5-O-(1-carboxyvinyl)-3-phosphoshikimate = chorismate + phosphate. The protein operates within metabolic intermediate biosynthesis; chorismate biosynthesis; chorismate from D-erythrose 4-phosphate and phosphoenolpyruvate: step 7/7. Its function is as follows. Catalyzes the anti-1,4-elimination of the C-3 phosphate and the C-6 proR hydrogen from 5-enolpyruvylshikimate-3-phosphate (EPSP) to yield chorismate, which is the branch point compound that serves as the starting substrate for the three terminal pathways of aromatic amino acid biosynthesis. This reaction introduces a second double bond into the aromatic ring system. In Beijerinckia indica subsp. indica (strain ATCC 9039 / DSM 1715 / NCIMB 8712), this protein is Chorismate synthase.